The primary structure comprises 329 residues: Ribosome biogenesis regulatory protein homolog (329 aa).

2 disordered regions span residues Lys-227–Glu-248 and Lys-262–Lys-329. A compositionally biased stretch (basic and acidic residues) spans Leu-278–Arg-295. Residues Ala-320–Lys-329 show a composition bias toward basic residues.

The protein belongs to the RRS1 family.

Its subcellular location is the nucleus. The protein resides in the nucleolus. Functionally, involved in ribosomal large subunit assembly. The chain is Ribosome biogenesis regulatory protein homolog from Caenorhabditis briggsae.